We begin with the raw amino-acid sequence, 410 residues long: Multifunctional CCA protein (410 aa).

2 residues coordinate ATP: glycine 8 and arginine 11. The CTP site is built by glycine 8 and arginine 11. Mg(2+) contacts are provided by aspartate 21 and aspartate 23. The ATP site is built by arginine 91, arginine 137, and arginine 140. The CTP site is built by arginine 91, arginine 137, and arginine 140. Residues 228–329 (TGVHVLSVLQ…LELLQSFDVY (102 aa)) enclose the HD domain.

This sequence belongs to the tRNA nucleotidyltransferase/poly(A) polymerase family. Bacterial CCA-adding enzyme type 1 subfamily. Monomer. Can also form homodimers and oligomers. Mg(2+) is required as a cofactor. It depends on Ni(2+) as a cofactor.

The catalysed reaction is a tRNA precursor + 2 CTP + ATP = a tRNA with a 3' CCA end + 3 diphosphate. It catalyses the reaction a tRNA with a 3' CCA end + 2 CTP + ATP = a tRNA with a 3' CCACCA end + 3 diphosphate. Catalyzes the addition and repair of the essential 3'-terminal CCA sequence in tRNAs without using a nucleic acid template. Adds these three nucleotides in the order of C, C, and A to the tRNA nucleotide-73, using CTP and ATP as substrates and producing inorganic pyrophosphate. tRNA 3'-terminal CCA addition is required both for tRNA processing and repair. Also involved in tRNA surveillance by mediating tandem CCA addition to generate a CCACCA at the 3' terminus of unstable tRNAs. While stable tRNAs receive only 3'-terminal CCA, unstable tRNAs are marked with CCACCA and rapidly degraded. The chain is Multifunctional CCA protein from Pseudomonas paraeruginosa (strain DSM 24068 / PA7) (Pseudomonas aeruginosa (strain PA7)).